Reading from the N-terminus, the 375-residue chain is 23S rRNA (uracil(747)-C(5))-methyltransferase RlmC (375 aa).

Residues C3, C11, C14, and C87 each contribute to the [4Fe-4S] cluster site. Positions 212, 241, 262, and 307 each coordinate S-adenosyl-L-methionine. The active-site Nucleophile is C334.

The protein belongs to the class I-like SAM-binding methyltransferase superfamily. RNA M5U methyltransferase family. RlmC subfamily.

It carries out the reaction uridine(747) in 23S rRNA + S-adenosyl-L-methionine = 5-methyluridine(747) in 23S rRNA + S-adenosyl-L-homocysteine + H(+). In terms of biological role, catalyzes the formation of 5-methyl-uridine at position 747 (m5U747) in 23S rRNA. The protein is 23S rRNA (uracil(747)-C(5))-methyltransferase RlmC of Shigella boydii serotype 18 (strain CDC 3083-94 / BS512).